We begin with the raw amino-acid sequence, 227 residues long: Cytidylate kinase (227 aa).

Residue 12–20 coordinates ATP; that stretch reads GPSGAGKGT.

This sequence belongs to the cytidylate kinase family. Type 1 subfamily.

It localises to the cytoplasm. The enzyme catalyses CMP + ATP = CDP + ADP. It carries out the reaction dCMP + ATP = dCDP + ADP. This Escherichia fergusonii (strain ATCC 35469 / DSM 13698 / CCUG 18766 / IAM 14443 / JCM 21226 / LMG 7866 / NBRC 102419 / NCTC 12128 / CDC 0568-73) protein is Cytidylate kinase.